The chain runs to 257 residues: Large ribosomal subunit protein eL8z (257 aa).

This sequence belongs to the eukaryotic ribosomal protein eL8 family.

The polypeptide is Large ribosomal subunit protein eL8z (RPL7AA) (Arabidopsis thaliana (Mouse-ear cress)).